A 145-amino-acid chain; its full sequence is D-aminoacyl-tRNA deacylase (145 aa).

A Gly-cisPro motif, important for rejection of L-amino acids motif is present at residues 137–138 (GP).

This sequence belongs to the DTD family. Homodimer.

Its subcellular location is the cytoplasm. The enzyme catalyses glycyl-tRNA(Ala) + H2O = tRNA(Ala) + glycine + H(+). It carries out the reaction a D-aminoacyl-tRNA + H2O = a tRNA + a D-alpha-amino acid + H(+). Functionally, an aminoacyl-tRNA editing enzyme that deacylates mischarged D-aminoacyl-tRNAs. Also deacylates mischarged glycyl-tRNA(Ala), protecting cells against glycine mischarging by AlaRS. Acts via tRNA-based rather than protein-based catalysis; rejects L-amino acids rather than detecting D-amino acids in the active site. By recycling D-aminoacyl-tRNA to D-amino acids and free tRNA molecules, this enzyme counteracts the toxicity associated with the formation of D-aminoacyl-tRNA entities in vivo and helps enforce protein L-homochirality. In Shewanella pealeana (strain ATCC 700345 / ANG-SQ1), this protein is D-aminoacyl-tRNA deacylase.